Reading from the N-terminus, the 494-residue chain is ATP-dependent RNA helicase HAS1 (494 aa).

The disordered stretch occupies residues 1–23; sequence MAQTKRSRDESEKEEVVVKADVE. A Q motif motif is present at residues 29 to 57; sequence HSFKSLNLSQPTMRAIEKMGFSKMTPVQA. Residues 60 to 236 form the Helicase ATP-binding domain; it reads IPPLMAGRDV…RISLRPGPLF (177 aa). An ATP-binding site is contributed by 73 to 80; it reads AKTGSGKT. The DEAD box signature appears at 183–186; that stretch reads DEAD. One can recognise a Helicase C-terminal domain in the interval 250-420; the sequence is GLEQGYVVCE…NVQSQLEKLI (171 aa). Residues 262 to 278 carry the Bipartite nuclear localization signal motif; it reads KRFLLLFSFLKRNQKKK.

It belongs to the DEAD box helicase family. DDX18/HAS1 subfamily. As to quaternary structure, associates in the nucleolus with the 60S and pre-60S ribosomal subunits.

Its subcellular location is the nucleus. The protein resides in the nucleolus. It carries out the reaction ATP + H2O = ADP + phosphate + H(+). In terms of biological role, ATP-dependent RNA helicase involved in 40S ribosomal subunit biogenesis. Required for the processing and cleavage of 35S pre-rRNA at sites A0, A1, and A2, leading to mature 18S rRNA. The polypeptide is ATP-dependent RNA helicase HAS1 (HAS1) (Candida glabrata (strain ATCC 2001 / BCRC 20586 / JCM 3761 / NBRC 0622 / NRRL Y-65 / CBS 138) (Yeast)).